We begin with the raw amino-acid sequence, 90 residues long: MARRIICAKLGIEADGLDAPPFPGPQGQRIFEHVSKEAWQDWLKLQTMLINEHRLTPFEASARKFLEQEREKFLFGGGTSTPQGYVPPRS.

It belongs to the Fe(2+)-trafficking protein family.

Functionally, could be a mediator in iron transactions between iron acquisition and iron-requiring processes, such as synthesis and/or repair of Fe-S clusters in biosynthetic enzymes. The polypeptide is Probable Fe(2+)-trafficking protein (Methylococcus capsulatus (strain ATCC 33009 / NCIMB 11132 / Bath)).